The primary structure comprises 267 residues: Hydrolase FUB4 (267 aa).

Catalysis depends on charge relay system residues serine 93, aspartate 183, and histidine 243.

The protein belongs to the AB hydrolase 3 family.

It participates in mycotoxin biosynthesis. Functionally, hydrolase; part of the gene cluster that mediates the biosynthesis of fusaric acid, a mycotoxin with low to moderate toxicity to animals and humans, but with high phytotoxic properties. L-aspartate is suggested as fusaric acid amino acid precursor that is activated and further processed to O-acetyl-L-homoserine by cluster enzymes aspartate kinase FUB3 and homoserine O-acetyltransferase FUB5, as well as enzymes of the primary metabolism. The polyketide synthase (PKS) FUB1 generates the triketide trans-2-hexenal which is presumptively released by the hydrolase FUB4 and linked to the NRPS-bound amino acid precursor by NAD(P)-dependent dehydrogenase FUB6. FUB1, FUB4, and the non-canonical NRPS Fub8 may form an enzyme complex. Further processing of the NRPS-bound intermediate might be carried out by FUB6 and the sulfhydrylase FUB7, enabling a spontaneous electrocyclization to close the carbon backbone of fusaric acid. Dihydrofusaric acid is likely to be released via reduction by the thioester reductase (TR) domain of FUB8 whereupon the final oxidation to fusaric acid may (also) be performed by the FMN-dependent dehydrogenase FUB9. This is Hydrolase FUB4 from Gibberella moniliformis (strain M3125 / FGSC 7600) (Maize ear and stalk rot fungus).